Here is a 431-residue protein sequence, read N- to C-terminus: Glutamate-1-semialdehyde 2,1-aminomutase (431 aa).

K265 is modified (N6-(pyridoxal phosphate)lysine).

The protein belongs to the class-III pyridoxal-phosphate-dependent aminotransferase family. HemL subfamily. Homodimer. Pyridoxal 5'-phosphate is required as a cofactor.

It is found in the cytoplasm. It carries out the reaction (S)-4-amino-5-oxopentanoate = 5-aminolevulinate. The protein operates within porphyrin-containing compound metabolism; protoporphyrin-IX biosynthesis; 5-aminolevulinate from L-glutamyl-tRNA(Glu): step 2/2. The chain is Glutamate-1-semialdehyde 2,1-aminomutase from Aliivibrio fischeri (strain MJ11) (Vibrio fischeri).